Reading from the N-terminus, the 276-residue chain is Rhamnulose-1-phosphate aldolase (276 aa).

Glu-117 is a catalytic residue. Positions 141, 143, and 212 each coordinate Zn(2+).

It belongs to the aldolase class II family. RhaD subfamily. As to quaternary structure, homotetramer. Requires Zn(2+) as cofactor.

The protein localises to the cytoplasm. The enzyme catalyses L-rhamnulose 1-phosphate = (S)-lactaldehyde + dihydroxyacetone phosphate. It participates in carbohydrate degradation; L-rhamnose degradation; glycerone phosphate from L-rhamnose: step 3/3. In terms of biological role, catalyzes the reversible cleavage of L-rhamnulose-1-phosphate to dihydroxyacetone phosphate (DHAP) and L-lactaldehyde. The protein is Rhamnulose-1-phosphate aldolase of Enterobacter sp. (strain 638).